The primary structure comprises 131 residues: Leptin receptor overlapping transcript-like 1 (131 aa).

Helical transmembrane passes span 7-27 (LISLSFGGAIGLMFLMLGCAL), 32-52 (QYWPLFVLFFYILSPIPYCIA), 69-89 (LAIFLTTGIVVSAFGLPIVFA), and 100-120 (ALVLTGNTVIFATILGFFLVF).

It belongs to the OB-RGRP/VPS55 family.

Its subcellular location is the membrane. Negatively regulates growth hormone (GH) receptor cell surface expression in liver. May play a role in liver resistance to GH during periods of reduced nutrient availability. The chain is Leptin receptor overlapping transcript-like 1 (LEPROTL1) from Bos taurus (Bovine).